The following is a 459-amino-acid chain: Probable acetate kinase (459 aa).

N9 serves as a coordination point for Mg(2+). Position 16 (K16) interacts with ATP. R100 serves as a coordination point for substrate. D156 acts as the Proton donor/acceptor in catalysis. Residues 216–220 (HLGSG) and 299–301 (DFR) contribute to the ATP site. A disordered region spans residues 308-338 (TTTSSPTPSPNPNPNPNPDPNPDPNPDPQNQ). A compositionally biased stretch (pro residues) spans 314–334 (TPSPNPNPNPNPDPNPDPNPD). Residue E441 participates in Mg(2+) binding.

This sequence belongs to the acetokinase family. Mg(2+) serves as cofactor.

The enzyme catalyses acetate + ATP = acetyl phosphate + ADP. It participates in metabolic intermediate biosynthesis; acetyl-CoA biosynthesis; acetyl-CoA from acetate: step 1/2. This chain is Probable acetate kinase, found in Chaetomium globosum (strain ATCC 6205 / CBS 148.51 / DSM 1962 / NBRC 6347 / NRRL 1970) (Soil fungus).